A 102-amino-acid chain; its full sequence is RxLR effector protein PexRD41 (102 aa).

Positions 1–21 are cleaved as a signal peptide; the sequence is MRSIFYFALAFAALTCSNASA. Residues 39–53 carry the RxLR-dEER motif; sequence RSLRVAGQEAARGEE.

It belongs to the RxLR effector family. Interacts with host KRBP1.

The protein localises to the secreted. It localises to the host cytoplasm. It is found in the host nucleus. The protein resides in the host nucleolus. Effector that enhances P.infestans colonization of host plant leaves. During the early stages of P.infestans infection, interacts with and stabilizes host potato K-homology (KH) RNA-binding protein KRBP1, leading to its accumulation. The chain is RxLR effector protein PexRD41 from Phytophthora infestans (strain T30-4) (Potato late blight agent).